Consider the following 510-residue polypeptide: Lysine--tRNA ligase (510 aa).

Mg(2+) is bound by residues Glu420 and Glu427.

It belongs to the class-II aminoacyl-tRNA synthetase family. In terms of assembly, homodimer. It depends on Mg(2+) as a cofactor.

It localises to the cytoplasm. It catalyses the reaction tRNA(Lys) + L-lysine + ATP = L-lysyl-tRNA(Lys) + AMP + diphosphate. This chain is Lysine--tRNA ligase, found in Vibrio vulnificus (strain CMCP6).